A 126-amino-acid polypeptide reads, in one-letter code: MKISVGNDIVENSRIRDLLEKHGDRFLKRVFSESEREYCSNRKDPIPHLSGRFCVKEAFIKAIEPGDHVILDMREIELFGKEFGKKELVLHGKSKELFLTKGYSGCSVSISHAENYSTAVVVLYKE.

Mg(2+) contacts are provided by D8 and E57.

It belongs to the P-Pant transferase superfamily. AcpS family. Mg(2+) serves as cofactor.

The protein resides in the cytoplasm. The catalysed reaction is apo-[ACP] + CoA = holo-[ACP] + adenosine 3',5'-bisphosphate + H(+). Functionally, transfers the 4'-phosphopantetheine moiety from coenzyme A to a Ser of acyl-carrier-protein. The protein is Holo-[acyl-carrier-protein] synthase of Leptospira interrogans serogroup Icterohaemorrhagiae serovar copenhageni (strain Fiocruz L1-130).